We begin with the raw amino-acid sequence, 627 residues long: Glyco-Gag protein (627 aa).

Topologically, residues 1 to 63 (LGDVPRTSGA…FLLSVWNRSR (63 aa)) are cytoplasmic. A helical transmembrane segment spans residues 64 to 86 (AARLVCCSIVLCCLCLTVFLYLS). Residues 87–627 (ENMGQTVTTP…PQASLLTLDD (541 aa)) are Extracellular-facing. A glycan (N-linked (GlcNAc...) asparagine; by host) is linked at asparagine 113. Pro residues predominate over residues 199–215 (PPSAPSLPPEPPFPTPP). 2 disordered regions span residues 199 to 310 (PPSA…RQGG) and 523 to 627 (RETP…TLDD). 2 stretches are compositionally biased toward basic and acidic residues: residues 523-555 (RETP…EKER) and 575-608 (RQDR…DCPK). The segment at 593-608 (CAYCKEKGHWARDCPK) adopts a CCHC-type zinc-finger fold.

Post-translationally, glycosylated by host. In terms of processing, cleaved by host near the middle of the molecule, releasing the c-terminal half containing capsid and nucleoprotein domains op GAG.

It is found in the host cell membrane. In terms of biological role, plays a role in viral particle release. Presumably acts by facilitating the fission of the virion bud at the cell surface. May prevent the antiviral activity of murine APOBEC3. This chain is Glyco-Gag protein, found in Friend murine leukemia virus (isolate 57) (FrMLV).